The chain runs to 201 residues: Recombination protein RecR (201 aa).

Residues 60–75 form a C4-type zinc finger; that stretch reads CSVCGNVDTTDPCSIC. The Toprim domain occupies 83-178; it reads TTIIVVEDVA…KITRLAHGVP (96 aa).

It belongs to the RecR family.

Functionally, may play a role in DNA repair. It seems to be involved in an RecBC-independent recombinational process of DNA repair. It may act with RecF and RecO. The protein is Recombination protein RecR of Bartonella quintana (strain Toulouse) (Rochalimaea quintana).